The following is a 138-amino-acid chain: MGRIVAIDYGEKRTGFAISDPLKMIVSSFVTVLSRKAVMYLKNCTENYDIELFVLGEPRQMDYTPSENMPRVEKFKRNLRRVIPSIDVQMVDERFTSVLAHRIMIEGGVKKIKRQDKGLVDRLSAAILLQTYLEFLRK.

Belongs to the YqgF nuclease family.

Its subcellular location is the cytoplasm. Could be a nuclease involved in processing of the 5'-end of pre-16S rRNA. In Azobacteroides pseudotrichonymphae genomovar. CFP2, this protein is Putative pre-16S rRNA nuclease.